Here is a 1228-residue protein sequence, read N- to C-terminus: ABC transporter B family member 16 (1228 aa).

Helical transmembrane passes span 22 to 42, 69 to 89, 145 to 167, 171 to 193, 251 to 271, and 283 to 303; these read MGLG…LFFI, LAML…GYCW, LPNI…MLLW, IVGF…ALIG, GIAI…TWYG, and GTVS…GQAL. An ABC transmembrane type-1 1 domain is found at 22–311; that stretch reads MGLGLIGAVG…ALSNLKYFSE (290 aa). Residues 346–582 enclose the ABC transporter 1 domain; the sequence is VEFNNVKCKY…DGKYTSLVRL (237 aa). 381-388 contributes to the ATP binding site; sequence GGSGSGKS. Residues Asn-529, Asn-593, and Asn-628 are each glycosylated (N-linked (GlcNAc...) asparagine). The ABC transmembrane type-1 2 domain maps to 658–946; that stretch reads ALCGCLSASL…AGTMTTDLAK (289 aa). Transmembrane regions (helical) follow at residues 667 to 687 and 700 to 720; these read LGGA…SVFF and IYVL…ISQQ. Asn-755 carries N-linked (GlcNAc...) asparagine glycosylation. Helical transmembrane passes span 781-801 and 805-825; these read LLVQ…VIAW and IVMI…RVLL. N-linked (GlcNAc...) asparagine glycosylation is present at Asn-827. 2 helical membrane-spanning segments follow: residues 881–901 and 920–940; these read SWLA…TSAL and FFEL…AGTM. The region spanning 981-1219 is the ABC transporter 2 domain; it reads ITFLNVDFAY…GPTGSYFSLV (239 aa). N-linked (GlcNAc...) asparagine glycosylation occurs at Asn-1001. 1016 to 1023 serves as a coordination point for ATP; the sequence is GPSRSGKS.

It belongs to the ABC transporter superfamily. ABCB family. Multidrug resistance exporter (TC 3.A.1.201) subfamily.

It is found in the membrane. This is ABC transporter B family member 16 (ABCB16) from Arabidopsis thaliana (Mouse-ear cress).